We begin with the raw amino-acid sequence, 101 residues long: Thyrotropin subunit beta (101 aa).

4 cysteine pairs are disulfide-bonded: Cys2–Cys88, Cys10–Cys66, Cys14–Cys68, and Cys71–Cys78. Residue Asn6 is glycosylated (N-linked (GlcNAc...) asparagine).

Belongs to the glycoprotein hormones subunit beta family. Heterodimer of a common alpha chain and a unique beta chain which confers biological specificity to thyrotropin, lutropin, follitropin and gonadotropin.

Its subcellular location is the secreted. In terms of biological role, indispensable for the control of thyroid structure and metabolism. The sequence is that of Thyrotropin subunit beta (TSHB) from Phodopus sungorus (Striped hairy-footed hamster).